The following is a 1028-amino-acid chain: Sodium/potassium-transporting ATPase subunit alpha-4 (1028 aa).

A disordered region spans residues 1–36; that stretch reads MEPGKETAATSEQKPRPTLRASNTNRQPKVKRRKKD. Topologically, residues 1–92 are cytoplasmic; that stretch reads MEPGKETAAT…NVLTPPPTTP (92 aa). The segment at 87–89 is interaction with phosphoinositide-3 kinase; the sequence is PPP. Residues 93–113 traverse the membrane as a helical segment; it reads EWIKFCKQLFGGFSLLLWTGS. Over 114 to 137 the chain is Extracellular; sequence LLCFLAYGIHVSYYQENANKDNLY. Residues 138-158 traverse the membrane as a helical segment; the sequence is LGIVLSAVVIITGCFSYYQEA. The Cytoplasmic segment spans residues 159–294; it reads KSSKIMESFK…MGKTPIATEI (136 aa). The helical transmembrane segment at 295 to 314 threads the bilayer; sequence EHFIHIITAVAVFLGVTFFF. Residues 315-326 are Extracellular-facing; it reads LSLILGYTWLDA. Residues 327-344 form a helical membrane-spanning segment; that stretch reads VIFLIGIIVANVPEGLLA. Topologically, residues 345–777 are cytoplasmic; sequence TVTVCLTLTA…EEGRLIFDNL (433 aa). Asp-382 acts as the 4-aspartylphosphate intermediate in catalysis. Mg(2+) is bound by residues Asp-722 and Asp-726. A helical transmembrane segment spans residues 778-797; the sequence is KKSIAYTLTSNIPEITPFLL. Topologically, residues 798–807 are extracellular; it reads FIVLSIPLPL. The helical transmembrane segment at 808-828 threads the bilayer; the sequence is GTITILCIDLGTDMVPAISLA. Residues 829-848 lie on the Cytoplasmic side of the membrane; that stretch reads YETPESDIMKRLPRNPKTDN. Residues 849–871 traverse the membrane as a helical segment; sequence LVNDRLIGMAYGQIGMIQALAGF. The Extracellular segment spans residues 872–923; sequence FTYFVILAENGFKPLDLLGIRLYWDDTNLNDLEDTYGQQWTYEQRKVVEFTC. Residues 924-943 form a helical membrane-spanning segment; it reads QTAFFISIVIVQWADLIICK. Topologically, residues 944 to 956 are cytoplasmic; sequence TRRNSLFKQGMKN. A Phosphoserine; by PKA modification is found at Ser-948. A helical membrane pass occupies residues 957–975; it reads KVLIFGLLEETILAACLSY. Over 976–990 the chain is Extracellular; that stretch reads IPGMDVALRMYPLKI. Residues 991–1011 traverse the membrane as a helical segment; sequence NWWFCALPYSVLIFIYDEVRK. Residues 1012 to 1028 lie on the Cytoplasmic side of the membrane; the sequence is LIIRRRPGGWLEKETYY.

The protein belongs to the cation transport ATPase (P-type) (TC 3.A.3) family. Type IIC subfamily. The sodium/potassium-transporting ATPase is composed of a catalytic alpha subunit, an auxiliary non-catalytic beta subunit and an additional regulatory subunit.

Its subcellular location is the cell membrane. It catalyses the reaction K(+)(out) + Na(+)(in) + ATP + H2O = K(+)(in) + Na(+)(out) + ADP + phosphate + H(+). Specifically inhibited by an endogenous cardiac glycoside, ouabain. Its function is as follows. This is the catalytic component of the active enzyme, which catalyzes the hydrolysis of ATP coupled with the exchange of sodium and potassium ions across the plasma membrane. This action creates the electrochemical gradient of sodium and potassium ions, providing the energy for active transport of various nutrients. Plays a role in sperm motility. This chain is Sodium/potassium-transporting ATPase subunit alpha-4 (Atp1a4), found in Rattus norvegicus (Rat).